The following is a 281-amino-acid chain: Lipoyl synthase (281 aa).

The [4Fe-4S] cluster site is built by cysteine 35, cysteine 40, cysteine 46, cysteine 61, cysteine 65, cysteine 68, and serine 274. The Radical SAM core domain occupies 47–263 (FGCGQATFLI…RDEALALGFR (217 aa)).

Belongs to the radical SAM superfamily. Lipoyl synthase family. Requires [4Fe-4S] cluster as cofactor.

It is found in the cytoplasm. It carries out the reaction [[Fe-S] cluster scaffold protein carrying a second [4Fe-4S](2+) cluster] + N(6)-octanoyl-L-lysyl-[protein] + 2 oxidized [2Fe-2S]-[ferredoxin] + 2 S-adenosyl-L-methionine + 4 H(+) = [[Fe-S] cluster scaffold protein] + N(6)-[(R)-dihydrolipoyl]-L-lysyl-[protein] + 4 Fe(3+) + 2 hydrogen sulfide + 2 5'-deoxyadenosine + 2 L-methionine + 2 reduced [2Fe-2S]-[ferredoxin]. It participates in protein modification; protein lipoylation via endogenous pathway; protein N(6)-(lipoyl)lysine from octanoyl-[acyl-carrier-protein]: step 2/2. In terms of biological role, catalyzes the radical-mediated insertion of two sulfur atoms into the C-6 and C-8 positions of the octanoyl moiety bound to the lipoyl domains of lipoate-dependent enzymes, thereby converting the octanoylated domains into lipoylated derivatives. In Trichlorobacter lovleyi (strain ATCC BAA-1151 / DSM 17278 / SZ) (Geobacter lovleyi), this protein is Lipoyl synthase.